The sequence spans 90 residues: VLTDDDKNHVRAIWGHVSNNPEAFGAEALYRLFTAHPASKTYFSHFDLHENSAQIRXXXXKVVDALTQAVNNLDDLSGAISKLSDLHAEK.

Residues 1-90 (VLTDDDKNHV…SKLSDLHAEK (90 aa)) enclose the Globin domain.

Belongs to the globin family. As to quaternary structure, heterotetramer of two alpha chains and two beta chains. As to expression, red blood cells.

Involved in oxygen transport from the lung to the various peripheral tissues. This is Hemoglobin subunit alpha-1 from Saara hardwickii (Indian spiny-tailed lizard).